Consider the following 147-residue polypeptide: D-aminoacyl-tRNA deacylase (147 aa).

The Gly-cisPro motif, important for rejection of L-amino acids motif lies at 136–137 (GP).

It belongs to the DTD family. In terms of assembly, homodimer.

Its subcellular location is the cytoplasm. The enzyme catalyses glycyl-tRNA(Ala) + H2O = tRNA(Ala) + glycine + H(+). The catalysed reaction is a D-aminoacyl-tRNA + H2O = a tRNA + a D-alpha-amino acid + H(+). Functionally, an aminoacyl-tRNA editing enzyme that deacylates mischarged D-aminoacyl-tRNAs. Also deacylates mischarged glycyl-tRNA(Ala), protecting cells against glycine mischarging by AlaRS. Acts via tRNA-based rather than protein-based catalysis; rejects L-amino acids rather than detecting D-amino acids in the active site. By recycling D-aminoacyl-tRNA to D-amino acids and free tRNA molecules, this enzyme counteracts the toxicity associated with the formation of D-aminoacyl-tRNA entities in vivo and helps enforce protein L-homochirality. This is D-aminoacyl-tRNA deacylase from Persephonella marina (strain DSM 14350 / EX-H1).